The following is a 260-amino-acid chain: UPF0246 protein BURPS668_1321 (260 aa).

The protein belongs to the UPF0246 family.

The polypeptide is UPF0246 protein BURPS668_1321 (Burkholderia pseudomallei (strain 668)).